The primary structure comprises 1816 residues: Kinesin-like protein KIF1B (1816 aa).

Serine 2 is subject to N-acetylserine. Residues 5–354 (SVKVAVRVRP…LRYADRAKQI (350 aa)) enclose the Kinesin motor domain. An ATP-binding site is contributed by 97 to 104 (GQTGAGKS). Positions 270 to 350 (NINKSLTTLG…TLSTLRYADR (81 aa)) are interaction with KIFBP. The segment at 431-450 (FSTASMGSLTSSPSSCSLNS) is disordered. The segment covering 432 to 450 (STASMGSLTSSPSSCSLNS) has biased composition (low complexity). Positions 470–512 (GEEAIERLKESEKIIAELNETWEEKLRKTEAIRMEREALLAEM) form a coiled coil. The FHA domain maps to 556-612 (TRVGQADAERRQDIVLSGAHIKEEHCIFRSERNNTGEVIVTLEPCERSETYVNGKRV). A phosphothreonine mark is found at threonine 647 and threonine 652. A coiled-coil region spans residues 672–731 (IDMKQEMEKRLQEMEILYKREKEEADLLLEQQRLDYESKLQALQKQVETRSLAAETTEEE). Phosphoserine occurs at positions 1054, 1057, 1416, 1454, and 1487. The segment at 1550-1570 (STTTFESAITPSESSGYDSAD) is disordered. Residues serine 1573, serine 1603, serine 1610, and serine 1613 each carry the phosphoserine modification. Residues 1620 to 1637 (SVSSFSSSTLTPSSTCPS) are compositionally biased toward low complexity. The segment at 1620–1659 (SVSSFSSSTLTPSSTCPSLVDSRSSSMDQKTPEANSRASS) is disordered. Polar residues predominate over residues 1640–1659 (DSRSSSMDQKTPEANSRASS). The PH domain occupies 1701–1799 (VVSKKGYLHF…WLYAFNPLLA (99 aa)).

It belongs to the TRAFAC class myosin-kinesin ATPase superfamily. Kinesin family. Unc-104 subfamily. As to quaternary structure, monomer. Interacts with KIFBP; positively regulates KIF1B microtubule motor activity. Interacts (via C-terminus end of the kinesin-motor domain) with CHP1; the interaction occurs in a calcium-dependent manner. Interacts with MADD (via death domain); links this isoform of KIF1B to Rab3-carrying vesicles in anterograde synaptic vesicle transport. In terms of tissue distribution, expressed in the brain with lower expression in testis and liver (at protein level). Strongly expressed in the brain and ovary, with lower expression in lung, kidney, uterus, testis and liver. Isoform 2 is expressed in non-neuronal tissues.

The protein localises to the cytoplasm. It localises to the cytoskeleton. Its subcellular location is the cytoplasmic vesicle. It is found in the secretory vesicle. The protein resides in the synaptic vesicle membrane. The protein localises to the lysosome. It carries out the reaction ATP + H2O + a kinesin associated with a microtubule at position (n) = ADP + phosphate a kinesin associated with a microtubule at position (n+1, toward the plus end).. Has a plus-end-directed microtubule motor activity and functions as a motor for transport of vesicles and organelles along microtubules. In terms of biological role, has a plus-end-directed microtubule motor activity and functions as a motor for anterograde synaptic vesicle transport along axonal microtubules from the cell body to the presynapse in neuronal cells. Functionally, has a plus-end-directed microtubule motor activity and functions as a motor for the translocation of lysosomes from perinuclear regions to the cell periphery. This chain is Kinesin-like protein KIF1B, found in Rattus norvegicus (Rat).